Reading from the N-terminus, the 320-residue chain is Cytochrome f (320 aa).

Positions 1–35 (MENRNTFSWVKEQMTRSISVSIMIYVITQTSISNA) are cleaved as a signal peptide. Positions 36, 56, 59, and 60 each coordinate heme. A helical membrane pass occupies residues 286–306 (VQGLLFFFASVILAQVFLVLK).

The protein belongs to the cytochrome f family. The 4 large subunits of the cytochrome b6-f complex are cytochrome b6, subunit IV (17 kDa polypeptide, petD), cytochrome f and the Rieske protein, while the 4 small subunits are PetG, PetL, PetM and PetN. The complex functions as a dimer. Heme serves as cofactor.

The protein localises to the plastid. It is found in the chloroplast thylakoid membrane. Its function is as follows. Component of the cytochrome b6-f complex, which mediates electron transfer between photosystem II (PSII) and photosystem I (PSI), cyclic electron flow around PSI, and state transitions. This Agrostis stolonifera (Creeping bentgrass) protein is Cytochrome f.